A 140-amino-acid chain; its full sequence is UPF0306 protein YhbP (140 aa).

Belongs to the UPF0306 family.

The sequence is that of UPF0306 protein YhbP from Escherichia coli O6:H1 (strain CFT073 / ATCC 700928 / UPEC).